The sequence spans 485 residues: Peroxisomal catalase (485 aa).

Residues His53 and Asn126 contribute to the active site. Residue Tyr336 participates in heme binding.

The protein belongs to the catalase family. Homotetramer. Requires heme as cofactor.

The protein localises to the peroxisome matrix. The catalysed reaction is 2 H2O2 = O2 + 2 H2O. In terms of biological role, catalyzes the degradation of hydrogen peroxide (H(2)O(2)) generated by peroxisomal oxidases to water and oxygen, thereby protecting cells from the toxic effects of hydrogen peroxide. This chain is Peroxisomal catalase (CAT1), found in Candida albicans (strain SC5314 / ATCC MYA-2876) (Yeast).